We begin with the raw amino-acid sequence, 297 residues long: Protoheme IX farnesyltransferase (297 aa).

9 helical membrane-spanning segments follow: residues 16–36 (VVAL…PGVP), 45–65 (VLGF…NQLL), 93–113 (VFAS…VNLI), 114–134 (TAVL…VYLK), 141–161 (IVIG…AVTG), 172–192 (SLLV…LAIF), 223–243 (VVLA…AFYL), 244–264 (GGAI…LDPP), and 277–297 (IVYL…LPWL).

This sequence belongs to the UbiA prenyltransferase family. Protoheme IX farnesyltransferase subfamily.

It is found in the cell inner membrane. The enzyme catalyses heme b + (2E,6E)-farnesyl diphosphate + H2O = Fe(II)-heme o + diphosphate. It functions in the pathway porphyrin-containing compound metabolism; heme O biosynthesis; heme O from protoheme: step 1/1. In terms of biological role, converts heme B (protoheme IX) to heme O by substitution of the vinyl group on carbon 2 of heme B porphyrin ring with a hydroxyethyl farnesyl side group. This chain is Protoheme IX farnesyltransferase, found in Stenotrophomonas maltophilia (strain R551-3).